The following is a 382-amino-acid chain: Bifunctional enzyme IspD/IspF (382 aa).

A 2-C-methyl-D-erythritol 4-phosphate cytidylyltransferase region spans residues 1–225 (MTGKPSIAAL…AEERMAMISR (225 aa)). A 2-C-methyl-D-erythritol 2,4-cyclodiphosphate synthase region spans residues 225-382 (RTAMGFDVHG…AVATVRVPSI (158 aa)). 2 residues coordinate a divalent metal cation: Asp-231 and His-233. 4-CDP-2-C-methyl-D-erythritol 2-phosphate is bound by residues 231 to 233 (DVH) and 257 to 258 (HS). Residue His-265 coordinates a divalent metal cation. 4-CDP-2-C-methyl-D-erythritol 2-phosphate contacts are provided by residues 279 to 281 (DIG), 355 to 358 (TTTE), Phe-362, and Arg-365.

This sequence in the N-terminal section; belongs to the IspD/TarI cytidylyltransferase family. IspD subfamily. In the C-terminal section; belongs to the IspF family. It depends on a divalent metal cation as a cofactor.

It carries out the reaction 2-C-methyl-D-erythritol 4-phosphate + CTP + H(+) = 4-CDP-2-C-methyl-D-erythritol + diphosphate. It catalyses the reaction 4-CDP-2-C-methyl-D-erythritol 2-phosphate = 2-C-methyl-D-erythritol 2,4-cyclic diphosphate + CMP. It participates in isoprenoid biosynthesis; isopentenyl diphosphate biosynthesis via DXP pathway; isopentenyl diphosphate from 1-deoxy-D-xylulose 5-phosphate: step 2/6. Its pathway is isoprenoid biosynthesis; isopentenyl diphosphate biosynthesis via DXP pathway; isopentenyl diphosphate from 1-deoxy-D-xylulose 5-phosphate: step 4/6. Bifunctional enzyme that catalyzes the formation of 4-diphosphocytidyl-2-C-methyl-D-erythritol from CTP and 2-C-methyl-D-erythritol 4-phosphate (MEP) (IspD), and catalyzes the conversion of 4-diphosphocytidyl-2-C-methyl-D-erythritol 2-phosphate (CDP-ME2P) to 2-C-methyl-D-erythritol 2,4-cyclodiphosphate (ME-CPP) with a corresponding release of cytidine 5-monophosphate (CMP) (IspF). This is Bifunctional enzyme IspD/IspF from Rhizorhabdus wittichii (strain DSM 6014 / CCUG 31198 / JCM 15750 / NBRC 105917 / EY 4224 / RW1) (Sphingomonas wittichii).